We begin with the raw amino-acid sequence, 1014 residues long: MAESSDKLYRVEYAKSGRASCKKCSESIPKDSLRMAIMVQSPMFDGKVPHWYHFSCFWKVGHSIRHPDVEVDGFSELRWDDQQKVKKTAEAGGVTGKGQDGIGSKAEKTLGDFAAEYAKSNRSTCKGCMEKIEKGQVRLSKKMVDPEKPQLGMIDRWYHPGCFVKNREELGFRPEYSASQLKGFSLLATEDKEALKKQLPGVKSEGKRKGDEVDGVDEVAKKKSKKEKDKDSKLEKALKAQNDLIWNIKDELKKVCSTNDLKELLIFNKQQVPSGESAILDRVADGMVFGALLPCEECSGQLVFKSDAYYCTGDVTAWTKCMVKTQTPNRKEWVTPKEFREISYLKKLKVKKQDRIFPPETSASVAATPPPSTASAPAAVNSSASADKPLSNMKILTLGKLSRNKDEVKAMIEKLGGKLTGTANKASLCISTKKEVEKMNKKMEEVKEANIRVVSEDFLQDVSASTKSLQELFLAHILSPWGAEVKAEPVEVVAPRGKSGAALSKKSKGQVKEEGINKSEKRMKLTLKGGAAVDPDSGLEHSAHVLEKGGKVFSATLGLVDIVKGTNSYYKLQLLEDDKENRYWIFRSWGRVGTVIGSNKLEQMPSKEDAIEHFMKLYEEKTGNAWHSKNFTKYPKKFYPLEIDYGQDEEAVKKLTVNPGTKSKLPKPVQDLIKMIFDVESMKKAMVEYEIDLQKMPLGKLSKRQIQAAYSILSEVQQAVSQGSSDSQILDLSNRFYTLIPHDFGMKKPPLLNNADSVQAKVEMLDNLLDIEVAYSLLRGGSDDSSKDPIDVNYEKLKTDIKVVDRDSEEAEIIRKYVKNTHATTHNAYDLEVIDIFKIEREGECQRYKPFKQLHNRRLLWHGSRTTNFAGILSQGLRIAPPEAPVTGYMFGKGIYFADMVSKSANYCHTSQGDPIGLILLGEVALGNMYELKHASHISKLPKGKHSVKGLGKTTPDPSANISLDGVDVPLGTGISSGVNDTSLLYNEYIVYDIAQVNLKYLLKLKFNFKTSLW.

Ala2 is subject to N-acetylalanine. Residues 9 to 93 (YRVEYAKSGR…KVKKTAEAGG (85 aa)) form a PARP-type 1 zinc finger. The Zn(2+) site is built by Cys21 and Cys24. Ser41 carries the phosphoserine modification. The Zn(2+) site is built by His53 and Cys56. Lys97 and Lys105 each carry N6-acetyllysine. Residues 113–203 (FAAEYAKSNR…ALKKQLPGVK (91 aa)) form a PARP-type 2 zinc finger. Cys125 and Cys128 together coordinate Zn(2+). Lys131 is subject to N6-acetyllysine. 2 residues coordinate Zn(2+): His159 and Cys162. 3 positions are modified to phosphoserine: Ser177, Ser179, and Ser185. Residue Lys192 forms a Glycyl lysine isopeptide (Lys-Gly) (interchain with G-Cter in SUMO2) linkage. A disordered region spans residues 198-233 (QLPGVKSEGKRKGDEVDGVDEVAKKKSKKEKDKDSK). Lys203 participates in a covalent cross-link: Glycyl lysine isopeptide (Lys-Gly) (interchain with G-Cter in SUMO1); alternate. Lys203 is covalently cross-linked (Glycyl lysine isopeptide (Lys-Gly) (interchain with G-Cter in SUMO2); alternate). A compositionally biased stretch (basic and acidic residues) spans 204 to 233 (SEGKRKGDEVDGVDEVAKKKSKKEKDKDSK). 2 short sequence motifs (nuclear localization signal) span residues 207 to 209 (KRK) and 221 to 226 (KKKSKK). A PADR1 zinc-binding domain is found at 225–359 (KKEKDKDSKL…VKKQDRIFPP (135 aa)). Lys249 participates in a covalent cross-link: Glycyl lysine isopeptide (Lys-Gly) (interchain with G-Cter in SUMO2). Phosphoserine occurs at positions 274 and 277. The segment at 290–332 (GALLPCEECSGQLVFKSDAYYCTGDVTAWTKCMVKTQTPNRKE) is zinc ribbon. Positions 295, 298, 311, and 321 each coordinate Zn(2+). The interval 361-385 (TSASVAATPPPSTASAPAAVNSSAS) is disordered. At Ser364 the chain carries Phosphoserine. Thr368 bears the Phosphothreonine mark. The automodification domain stretch occupies residues 373–524 (TASAPAAVNS…GINKSEKRMK (152 aa)). The BRCT domain occupies 385–476 (SADKPLSNMK…KSLQELFLAH (92 aa)). Residue Asp387 is modified to PolyADP-ribosyl aspartic acid. Glu407, Glu413, Glu435, Glu437, Glu444, Glu445, Glu448, and Glu456 each carry polyADP-ribosyl glutamic acid. Lys467 is covalently cross-linked (Glycyl lysine isopeptide (Lys-Gly) (interchain with G-Cter in SUMO2)). Glu471 and Glu484 each carry polyADP-ribosyl glutamic acid. A Glycyl lysine isopeptide (Lys-Gly) (interchain with G-Cter in SUMO1); alternate cross-link involves residue Lys486. Lys486 is covalently cross-linked (Glycyl lysine isopeptide (Lys-Gly) (interchain with G-Cter in SUMO2); alternate). Residues Glu488 and Glu491 each carry the polyADP-ribosyl glutamic acid modification. An ADP-ribosylserine mark is found at Ser499, Ser504, and Ser507. Lys512 is covalently cross-linked (Glycyl lysine isopeptide (Lys-Gly) (interchain with G-Cter in SUMO2)). A polyADP-ribosyl glutamic acid mark is found at Glu513 and Glu514. Ser519 carries the post-translational modification ADP-ribosylserine. Position 520 is a polyADP-ribosyl glutamic acid (Glu520). N6-(ADP-ribosyl)lysine is present on Lys521. Lys528 participates in a covalent cross-link: Glycyl lysine isopeptide (Lys-Gly) (interchain with G-Cter in SUMO2). Residues 542 to 638 (SAHVLEKGGK…KNFTKYPKKF (97 aa)) enclose the WGR domain. Phosphothreonine; by PRKDC is present on Thr594. N6-acetyllysine occurs at positions 600 and 621. The region spanning 662–779 (KSKLPKPVQD…DIEVAYSLLR (118 aa)) is the PARP alpha-helical domain. Residue Lys748 forms a Glycyl lysine isopeptide (Lys-Gly) (interchain with G-Cter in SUMO1); alternate linkage. Lys748 participates in a covalent cross-link: Glycyl lysine isopeptide (Lys-Gly) (interchain with G-Cter in SUMO2); alternate. Phosphoserine occurs at positions 782 and 786. A PARP catalytic domain is found at 788 to 1014 (DPIDVNYEKL…LKFNFKTSLW (227 aa)). NAD(+) is bound by residues 862-864 (HGS), Gly871, Arg878, and Ser904. Residue Glu988 is the For poly [ADP-ribose] polymerase activity of the active site.

This sequence belongs to the ARTD/PARP family. In terms of assembly, homodimer; PARP-type zinc-fingers from separate PARP1 molecules form a dimer module that specifically recognizes DNA strand breaks. Heterodimer; heterodimerizes with PARP2. Interacts (via the PARP catalytic domain) with HPF1. Interacts with NMNAT1. Interacts with nucleosomes; with a preference for nucleosomes containing H2A.X. Interacts with APTX. Component of a base excision repair (BER) complex, containing at least XRCC1, PARP1, PARP2, POLB and LRIG3. Interacts with SRY. The SWAP complex consists of NPM1, NCL, PARP1 and SWAP70. Interacts with TIAM2. Interacts with PARP3; leading to activate PARP1 in absence of DNA. Interacts (when poly-ADP-ribosylated) with CHD1L (via macro domain). Interacts with the DNA polymerase alpha catalytic subunit POLA1; this interaction functions as part of the control of replication fork progression. Interacts with EEF1A1 and TXK. Interacts with RNF4. Interacts with RNF146. Interacts with ZNF423. Interacts with APLF. Interacts with SNAI1 (via zinc fingers); the interaction requires SNAI1 to be poly-ADP-ribosylated and non-phosphorylated (active) by GSK3B. Interacts (when poly-ADP-ribosylated) with PARP9. Interacts with NR4A3; activates PARP1 by improving acetylation of PARP1 and suppressing the interaction between PARP1 and SIRT1. Interacts (via catalytic domain) with PUM3; the interaction inhibits the poly-ADP-ribosylation activity of PARP1 and the degradation of PARP1 by CASP3 following genotoxic stress. Interacts with ZNF365. Interacts with RRP1B. Interacts with TIMELESS; the interaction is direct. Interacts with CGAS; leading to impede the formation of the PARP1-TIMELESS complex. Interacts with KHDC3L, the interaction is increased following the formation of DNA double-strand breaks. Interacts (when auto-poly-ADP-ribosylated) with XRCC1; leading to inhibit PARP1 ADP-ribosyltransferase activity. Interacts with SPINDOC; promoting PARP1 ADP-ribosyltransferase activity. Interacts with BANF1; leading to inhibit PARP1 ADP-ribosyltransferase activity in response to oxidative DNA damage. Interacts (when sumoylated and ubiquitinated) with VCP/p97; leading to its extraction from chromatin. Interacts with YARS1; Interacts with PACMP micropeptide; interaction. Interacts with PACMP micropeptide; Interacts with PACMP micropeptide; interaction. Interacts (when poly-ADP-ribosylated) with isoform 1 of MACROH2A1; MACROH2A1 specifically binds to poly-ADP-ribose chains and inhibits PARP1 activity, limiting the consumption of nuclear NAD(+). Interacts with CARM1; promoting recruitment to replication forks. Interacts with RECQL. Interacts with ZNF32; the interaction reshapes ZNF432 interacting proteins. Interacts with TPRN; TPRN interacts with a number of DNA damage response proteins, is recruited to sites of DNA damage and may play a role in DNA damage repair. As to quaternary structure, interacts (when auto-poly-ADP-ribosylated) with AIFM1. (Microbial infection) Interacts with human herpesvirus 8 (KSHV) protein RTA/ORF50; this interaction negatively regulates RTA/ORF50 transactivation activity. Poly-ADP-ribosylated on serine, glutamate and aspartate residues by autocatalysis. Auto-ADP-ribosylation on serine takes place following interaction with HPF1. Auto poly-ADP-ribosylation on serine residues promotes its dissociation from chromatin. Poly-ADP-ribosylated by PARP2; poly-ADP-ribosylation mediates the recruitment of CHD1L to DNA damage sites. Mono-ADP-ribosylated at Lys-521 by SIRT6 in response to oxidative stress, promoting recruitment to double-strand breaks (DSBs) sites. Post-translationally, phosphorylated at Thr-594 by PRKDC in response to DNA damage following virus infection, promoting its translocation to the cytosol. Phosphorylated by TXK. In terms of processing, S-nitrosylated, leading to inhibit transcription regulation activity. Proteolytically cleaved by caspase-3 (CASP3) and caspase-7 (CASP7) in response to apoptosis to generate the Poly [ADP-ribose] polymerase 1, processed N-terminus and Poly [ADP-ribose] polymerase 1, processed C-terminus forms. CASP3-mediated cleavage is promoted by the TP53/p53-induced long non-coding RNA SPARCLE, which binds PARP1 in response to genotoxic stress. Post-translationally, sumoylated with SUMO1 or SUMO2 by PIAS4 following prolonged residence (trapping) to chromatin. Sumoylation promotes ubiquitination by RNF4 and removal from chromatin by VCP/p97. In terms of processing, ubiquitinated by RNF4 following sumoylation by PIAS4 in response to prolonged residence (trapping) to chromatin. Ubiquitination promotes removal from chromatin by VCP/p97.

It is found in the chromosome. It localises to the nucleus. The protein resides in the nucleolus. Its subcellular location is the cytoplasm. The protein localises to the cytosol. It catalyses the reaction NAD(+) + (ADP-D-ribosyl)n-acceptor = nicotinamide + (ADP-D-ribosyl)n+1-acceptor + H(+).. The catalysed reaction is L-seryl-[protein] + NAD(+) = O-(ADP-D-ribosyl)-L-seryl-[protein] + nicotinamide + H(+). The enzyme catalyses L-aspartyl-[protein] + NAD(+) = 4-O-(ADP-D-ribosyl)-L-aspartyl-[protein] + nicotinamide. It carries out the reaction L-glutamyl-[protein] + NAD(+) = 5-O-(ADP-D-ribosyl)-L-glutamyl-[protein] + nicotinamide. It catalyses the reaction L-tyrosyl-[protein] + NAD(+) = O-(ADP-D-ribosyl)-L-tyrosyl-[protein] + nicotinamide + H(+). The catalysed reaction is L-histidyl-[protein] + NAD(+) = N(tele)-(ADP-D-ribosyl)-L-histidyl-[protein] + nicotinamide + H(+). ADP-ribosyltransferase activity is regulated via an allosteric activation mechanism. In absence of activation signal, PARP1 is autoinhibited by the PARP alpha-helical domain (also named HD region), which prevents effective NAD(+)-binding. Activity is highly stimulated by signals, such as DNA strand breaks. Binding to damaged DNA unfolds the PARP alpha-helical domain, relieving autoinhibition. Poly-ADP-ribosyltransferase activity is tightly regulated and PARP1 is removed from damaged chromatin following initial poly-ADP-ribosylation of chromatin to avoid prolonged residence (trapping) that has cytotoxic consequences. A number of factors (VCP/p97) or post-translational modifications (auto-poly-ADP-ribosylation or ubiquitination) promote PARP1 removal from chromatin. ADP-ribosyltransferase activity is inhibited by a number of PARP inhibitors (PARPi) compounds, that are used the treatment of breast or ovarian cancers that have defects in DNA repair by homologous recombination. PARPi molecules can be classified in three categories: type I compounds (EB-47, UKTT15 and BAD) that promote allosteric retention of PARP1 on DNA, type II inhibitors (talazoparib and olaparib) that mediate a non-allosteric inhibition, and type III inhibitors (rucaparib, niraparib, and veliparib) that promote allosteric release from DNA. Trapping to chromatin by PARPi molecules triggers activation of the cGAS-STING pathway. Functionally, poly-ADP-ribosyltransferase that mediates poly-ADP-ribosylation of proteins and plays a key role in DNA repair. Mediates glutamate, aspartate, serine, histidine or tyrosine ADP-ribosylation of proteins: the ADP-D-ribosyl group of NAD(+) is transferred to the acceptor carboxyl group of target residues and further ADP-ribosyl groups are transferred to the 2'-position of the terminal adenosine moiety, building up a polymer with an average chain length of 20-30 units. Serine ADP-ribosylation of proteins constitutes the primary form of ADP-ribosylation of proteins in response to DNA damage. Specificity for the different amino acids is conferred by interacting factors, such as HPF1 and NMNAT1. Following interaction with HPF1, catalyzes serine ADP-ribosylation of target proteins; HPF1 confers serine specificity by completing the PARP1 active site. Also catalyzes tyrosine ADP-ribosylation of target proteins following interaction with HPF1. Following interaction with NMNAT1, catalyzes glutamate and aspartate ADP-ribosylation of target proteins; NMNAT1 confers glutamate and aspartate specificity. PARP1 initiates the repair of DNA breaks: recognizes and binds DNA breaks within chromatin and recruits HPF1, licensing serine ADP-ribosylation of target proteins, such as histones (H2BS6ADPr and H3S10ADPr), thereby promoting decompaction of chromatin and the recruitment of repair factors leading to the reparation of DNA strand breaks. HPF1 initiates serine ADP-ribosylation but restricts the polymerase activity of PARP1 in order to limit the length of poly-ADP-ribose chains. In addition to base excision repair (BER) pathway, also involved in double-strand breaks (DSBs) repair: together with TIMELESS, accumulates at DNA damage sites and promotes homologous recombination repair by mediating poly-ADP-ribosylation. Mediates the poly-ADP-ribosylation of a number of proteins, including itself, APLF, CHFR, RPA1 and NFAT5. In addition to proteins, also able to ADP-ribosylate DNA: catalyzes ADP-ribosylation of DNA strand break termini containing terminal phosphates and a 2'-OH group in single- and double-stranded DNA, respectively. Required for PARP9 and DTX3L recruitment to DNA damage sites. PARP1-dependent PARP9-DTX3L-mediated ubiquitination promotes the rapid and specific recruitment of 53BP1/TP53BP1, UIMC1/RAP80, and BRCA1 to DNA damage sites. PARP1-mediated DNA repair in neurons plays a role in sleep: senses DNA damage in neurons and promotes sleep, facilitating efficient DNA repair. In addition to DNA repair, also involved in other processes, such as transcription regulation, programmed cell death, membrane repair, adipogenesis and innate immunity. Acts as a repressor of transcription: binds to nucleosomes and modulates chromatin structure in a manner similar to histone H1, thereby altering RNA polymerase II. Acts both as a positive and negative regulator of transcription elongation, depending on the context. Acts as a positive regulator of transcription elongation by mediating poly-ADP-ribosylation of NELFE, preventing RNA-binding activity of NELFE and relieving transcription pausing. Acts as a negative regulator of transcription elongation in response to DNA damage by catalyzing poly-ADP-ribosylation of CCNT1, disrupting the phase separation activity of CCNT1 and subsequent activation of CDK9. Involved in replication fork progression following interaction with CARM1: mediates poly-ADP-ribosylation at replication forks, slowing fork progression. Poly-ADP-ribose chains generated by PARP1 also play a role in poly-ADP-ribose-dependent cell death, a process named parthanatos. Also acts as a negative regulator of the cGAS-STING pathway. Acts by mediating poly-ADP-ribosylation of CGAS: PARP1 translocates into the cytosol following phosphorylation by PRKDC and catalyzes poly-ADP-ribosylation and inactivation of CGAS. Acts as a negative regulator of adipogenesis: catalyzes poly-ADP-ribosylation of histone H2B on 'Glu-35' (H2BE35ADPr) following interaction with NMNAT1, inhibiting phosphorylation of H2B at 'Ser-36' (H2BS36ph), thereby blocking expression of pro-adipogenetic genes. Involved in the synthesis of ATP in the nucleus, together with NMNAT1, PARG and NUDT5. Nuclear ATP generation is required for extensive chromatin remodeling events that are energy-consuming. In terms of biological role, promotes AIFM1-mediated apoptosis. This form, which translocates into the cytoplasm following cleavage by caspase-3 (CASP3) and caspase-7 (CASP7) in response to apoptosis, is auto-poly-ADP-ribosylated and serves as a poly-ADP-ribose carrier to induce AIFM1-mediated apoptosis. This cleavage form irreversibly binds to DNA breaks and interferes with DNA repair, promoting DNA damage-induced apoptosis. The protein is Poly [ADP-ribose] polymerase 1 of Homo sapiens (Human).